A 734-amino-acid polypeptide reads, in one-letter code: Photosystem I P700 chlorophyll a apoprotein A2 (734 aa).

Transmembrane regions (helical) follow at residues 46 to 69 (IFASHFGQLAIIFLWTSGNLFHVA), 135 to 158 (LYNGSMFLLFIATLALFAGWLHLE), 175 to 199 (LNHHLSALFGLSSLAWSGHLIHVAI), 273 to 291 (IAHHHLAIAVLFIVAGHMY), 330 to 353 (LHFQLGLALASLGVITSLVAQHMY), 369 to 395 (AALYTHHQYIAGFIMTGAFAHGAIFFI), 417 to 439 (AIISHLSWVTLFLGFHTLGLYVH), and 517 to 535 (FLVHHAIALGLHTTTLILV). Residues cysteine 559 and cysteine 568 each contribute to the [4Fe-4S] cluster site. 2 helical membrane passes run 575-596 (AFYLAVFWMLNTIGWTTFYWHW) and 643-665 (LAVWGWMFLFGHLVWATGFMFLI). Chlorophyll a contacts are provided by histidine 654, methionine 662, and tyrosine 670. Tryptophan 671 contributes to the phylloquinone binding site. The helical transmembrane segment at 707 to 727 (LVGLAHFSVGYVFTYAAFLIA) threads the bilayer.

This sequence belongs to the PsaA/PsaB family. As to quaternary structure, the PsaA/B heterodimer binds the P700 chlorophyll special pair and subsequent electron acceptors. PSI consists of a core antenna complex that captures photons, and an electron transfer chain that converts photonic excitation into a charge separation. The eukaryotic PSI reaction center is composed of at least 11 subunits. It depends on P700 is a chlorophyll a/chlorophyll a' dimer, A0 is one or more chlorophyll a, A1 is one or both phylloquinones and FX is a shared 4Fe-4S iron-sulfur center. as a cofactor.

The protein localises to the plastid. It is found in the chloroplast thylakoid membrane. The catalysed reaction is reduced [plastocyanin] + hnu + oxidized [2Fe-2S]-[ferredoxin] = oxidized [plastocyanin] + reduced [2Fe-2S]-[ferredoxin]. PsaA and PsaB bind P700, the primary electron donor of photosystem I (PSI), as well as the electron acceptors A0, A1 and FX. PSI is a plastocyanin/cytochrome c6-ferredoxin oxidoreductase, converting photonic excitation into a charge separation, which transfers an electron from the donor P700 chlorophyll pair to the spectroscopically characterized acceptors A0, A1, FX, FA and FB in turn. Oxidized P700 is reduced on the lumenal side of the thylakoid membrane by plastocyanin or cytochrome c6. The protein is Photosystem I P700 chlorophyll a apoprotein A2 of Euglena gracilis.